The following is a 365-amino-acid chain: tRNA(Met) cytidine acetate ligase (365 aa).

ATP is bound by residues 7-20 (IAEF…HKYL), Gly-96, Asn-152, and Arg-175.

Belongs to the TmcAL family.

Its subcellular location is the cytoplasm. It catalyses the reaction cytidine(34) in elongator tRNA(Met) + acetate + ATP = N(4)-acetylcytidine(34) in elongator tRNA(Met) + AMP + diphosphate. Its function is as follows. Catalyzes the formation of N(4)-acetylcytidine (ac(4)C) at the wobble position of elongator tRNA(Met), using acetate and ATP as substrates. First activates an acetate ion to form acetyladenylate (Ac-AMP) and then transfers the acetyl group to tRNA to form ac(4)C34. This is tRNA(Met) cytidine acetate ligase from Streptococcus pneumoniae (strain Taiwan19F-14).